The sequence spans 159 residues: Eukaryotic translation initiation factor 5A-2 (159 aa).

Over residues 1–10 the composition is skewed to basic and acidic residues; it reads MSDEEHHFEP. Positions 1–21 are disordered; it reads MSDEEHHFEPAADAGASKTYP. Hypusine is present on Lys52.

It belongs to the eIF-5A family. Post-translationally, lys-52 undergoes hypusination, a unique post-translational modification that consists in the addition of a butylamino group from spermidine to lysine side chain, leading to the formation of the unusual amino acid hypusine. eIF-5As are the only known proteins to undergo this modification, which is essential for their function.

Functionally, translation factor that promotes translation elongation and termination, particularly upon ribosome stalling at specific amino acid sequence contexts. Binds between the exit (E) and peptidyl (P) site of the ribosome and promotes rescue of stalled ribosome: specifically required for efficient translation of polyproline-containing peptides as well as other motifs that stall the ribosome. Acts as a ribosome quality control (RQC) cofactor by joining the RQC complex to facilitate peptidyl transfer during CAT tailing step. In Medicago sativa (Alfalfa), this protein is Eukaryotic translation initiation factor 5A-2.